A 174-amino-acid polypeptide reads, in one-letter code: MFLTVKLLLGQRCSLKVSGQESVATLKRLVSRRLKVPEEQQHLLFRGQLLEDDKHLSDYCIGPNASINVIMQPLEKMALKEAHQPQTQPLWHQLGLVLAKHFEPQDAKAVLQLLRQEHEERLQKISLEHLEQLAQYLLAEEPHVEPAGERELEAKARPQSSCDMEEKEEAAADQ.

The Ubiquitin-like domain occupies 1–76 (MFLTVKLLLG…INVIMQPLEK (76 aa)). A compositionally biased stretch (basic and acidic residues) spans 141 to 156 (EPHVEPAGERELEAKA). The interval 141–174 (EPHVEPAGERELEAKARPQSSCDMEEKEEAAADQ) is disordered. Residues 163–174 (DMEEKEEAAADQ) show a composition bias toward acidic residues.

Its subcellular location is the cytoplasm. The chain is Ubiquitin-like protein 4B (UBL4B) from Homo sapiens (Human).